A 371-amino-acid chain; its full sequence is Cytochrome b (371 aa).

Transmembrane regions (helical) follow at residues Phe25–Val45, Trp69–Ile90, Trp105–Leu125, and Phe170–Ile190. His75 and His89 together coordinate heme b. Residues His174 and His188 each contribute to the heme b site. His193 contributes to the a ubiquinone binding site. 4 helical membrane passes run Tyr218–Met238, Leu280–His300, Leu312–Thr332, and Phe339–Pro358.

It belongs to the cytochrome b family. As to quaternary structure, the cytochrome bc1 complex contains 3 respiratory subunits (MT-CYB, CYC1 and UQCRFS1), 2 core proteins (UQCRC1 and UQCRC2) and probably 6 low-molecular weight proteins. Requires heme b as cofactor.

It localises to the mitochondrion inner membrane. Its function is as follows. Component of the ubiquinol-cytochrome c reductase complex (complex III or cytochrome b-c1 complex) that is part of the mitochondrial respiratory chain. The b-c1 complex mediates electron transfer from ubiquinol to cytochrome c. Contributes to the generation of a proton gradient across the mitochondrial membrane that is then used for ATP synthesis. The polypeptide is Cytochrome b (MT-CYB) (Toxicocalamus preussi (Preuss's forest snake)).